An 83-amino-acid polypeptide reads, in one-letter code: Small ribosomal subunit protein uS17 (83 aa).

Belongs to the universal ribosomal protein uS17 family. In terms of assembly, part of the 30S ribosomal subunit.

One of the primary rRNA binding proteins, it binds specifically to the 5'-end of 16S ribosomal RNA. This Campylobacter hominis (strain ATCC BAA-381 / DSM 21671 / CCUG 45161 / LMG 19568 / NCTC 13146 / CH001A) protein is Small ribosomal subunit protein uS17.